A 622-amino-acid chain; its full sequence is Lamin Dm0 (622 aa).

A disordered region spans residues 1-50; it reads MSSKSRRAGTATPQPGNTSTPRPPSAGPQPPPPSTHSQTASSPLSPTRHS. Serine 2 carries the post-translational modification N-acetylserine. A head region spans residues 2 to 56; the sequence is SSKSRRAGTATPQPGNTSTPRPPSAGPQPPPPSTHSQTASSPLSPTRHSRVAEKV. Phosphothreonine is present on residues threonine 10, threonine 12, and threonine 20. Over residues 21–34 the composition is skewed to pro residues; that stretch reads PRPPSAGPQPPPPS. Phosphoserine is present on residues serine 25 and serine 34. Threonine 39 is subject to Phosphothreonine. A phosphoserine mark is found at serine 41, serine 42, and serine 45. Threonine 47 carries the post-translational modification Phosphothreonine. The region spanning 54-410 is the IF rod domain; that stretch reads EKVELQNLND…KLLVGEEARL (357 aa). The interval 55–91 is coil 1A; that stretch reads KVELQNLNDRLATYIDRVRNLETENSRLTIEVQTTRD. The interval 92–103 is linker 1; sequence TVTRETTNIKNI. The tract at residues 104–241 is coil 1B; it reads FEAELLETRR…QIHSQEINES (138 aa). A Phosphoserine modification is found at serine 235. The interval 242–265 is linker 2; the sequence is RRIKQTEYSEIDGRLSSEYDAKLK. At tyrosine 249 the chain carries Phosphotyrosine. Phosphoserine is present on residues serine 250 and serine 311. The coil 2 stretch occupies residues 266 to 408; the sequence is QSLQELRAQY…YDKLLVGEEA (143 aa). The interval 409 to 619 is tail; it reads RLNITPATNT…GDPQQSNEKC (211 aa). Threonine 413 and threonine 435 each carry phosphothreonine. Residues 429-440 show a composition bias toward polar residues; the sequence is RNSTRATPSRRT. The tract at residues 429–448 is disordered; it reads RNSTRATPSRRTPSAAVKRK. Serine 442 bears the Phosphoserine mark. The Nuclear localization signal motif lies at 446–451; it reads KRKRAV. Phosphoserine is present on residues serine 455 and serine 459. Residues 461–588 form the LTD domain; that stretch reads ADYYVSASAK…RIVSQHTSSS (128 aa). A Phosphoserine modification is found at serine 595. Threonine 597 bears the Phosphothreonine mark. The segment at 603–622 is disordered; sequence EQLYHQQGDPQQSNEKCAIM. Over residues 605–622 the composition is skewed to polar residues; that stretch reads LYHQQGDPQQSNEKCAIM. At serine 615 the chain carries Phosphoserine. A Cysteine methyl ester modification is found at cysteine 619. Cysteine 619 carries S-farnesyl cysteine lipidation. A propeptide spans 620–622 (removed in mature form); sequence AIM.

It belongs to the intermediate filament family. As to quaternary structure, interacts directly with LBR. Interacts with MAN1. Interacts with Ote. In terms of processing, three forms of lamin have been identified in D.melanogaster, lamin Dm0 is rapidly processed to lamin Dm1 in the cytoplasm, Dm1 is then assembled in the nuclear envelope and is then phosphorylated, forming lamin Dm2. In terms of tissue distribution, constitutively expressed in all tissues (at protein level). Expressed in spermatocytes (at protein level).

The protein localises to the nucleus. It localises to the nucleus inner membrane. Its subcellular location is the nucleus envelope. The protein resides in the nucleus lamina. It is found in the cytoplasm. The protein localises to the cytoskeleton. It localises to the spindle pole. Functionally, lamins are components of the nuclear lamina, a fibrous layer on the nucleoplasmic side of the inner nuclear membrane, which is thought to provide a framework for the nuclear envelope and may also interact with chromatin. May have a role in the localization of the LEM domain proteins Ote, bocks and MAN1 to the nuclear membrane. In spermatocytes, plays a role in maintaining type-A lamin LamC nuclear localization; regulates meiotic cytokinesis by maintaining the structure of the spindle envelope, and by contributing to the formation of the contractile ring and central spindle. Required for nuclear migration and to link the microtubule organizing center (MTOC) to the nucleus. In addition, is required for nuclear envelope localization of klar. The chain is Lamin Dm0 from Drosophila melanogaster (Fruit fly).